A 287-amino-acid polypeptide reads, in one-letter code: ATP synthase gamma chain (287 aa).

The protein belongs to the ATPase gamma chain family. In terms of assembly, F-type ATPases have 2 components, CF(1) - the catalytic core - and CF(0) - the membrane proton channel. CF(1) has five subunits: alpha(3), beta(3), gamma(1), delta(1), epsilon(1). CF(0) has three main subunits: a, b and c.

It is found in the cell membrane. Produces ATP from ADP in the presence of a proton gradient across the membrane. The gamma chain is believed to be important in regulating ATPase activity and the flow of protons through the CF(0) complex. This is ATP synthase gamma chain from Staphylococcus carnosus (strain TM300).